A 616-amino-acid chain; its full sequence is Telomeric repeat-binding factor 2-interacting protein 1 (616 aa).

One can recognise a BRCT domain in the interval Phe15–Ile98. One can recognise a Myb-like domain in the interval Asn112–Leu169. The interval Ala174–Glu518 is disordered. A compositionally biased stretch (low complexity) spans Pro232 to Ala245. The segment covering Gly246–Asp255 has biased composition (polar residues). Composition is skewed to basic and acidic residues over residues Glu271 to Ser288 and Arg344 to Pro358. 2 stretches are compositionally biased toward polar residues: residues Glu363–Gly382 and Asn397–Pro415. A compositionally biased stretch (acidic residues) spans Glu431–Asn444. Positions Arg468–Thr480 are enriched in basic and acidic residues. A Nuclear localization signal motif is present at residues Ser597–Thr613.

This sequence belongs to the RAP1 family. In terms of assembly, homodimer. Component of the shelterin complex (telosome). Interacts with terf2; the interaction is direct.

Its subcellular location is the nucleus. It is found in the chromosome. The protein resides in the telomere. Functionally, acts both as a regulator of telomere function and as a transcription regulator. Involved in the regulation of telomere length and protection as a component of the shelterin complex (telosome). Does not bind DNA directly: recruited to telomeric double-stranded 5'-TTAGGG-3' repeats via its interaction with terf2. Independently of its function in telomeres, also acts as a transcription regulator: recruited to extratelomeric 5'-TTAGGG-3' sites via its association with terf2 or other factors, and regulates gene expression. The polypeptide is Telomeric repeat-binding factor 2-interacting protein 1 (terf2ip) (Danio rerio (Zebrafish)).